The following is a 296-amino-acid chain: MKKIAVFKQMPCEAADAPPAKTDLLPLSWPAKLELGYQRVKMRTVPVLRRHQGPLRVQKHLYPEGPAVCQHMILHPPGGIAGGDTLDIQIHAGSHAWAQLTSPGAAKWYRSEVSLARQNLALSTEPGGILEWLPQETIFFAGCQTALDTTIDLAEDAKVIAWDIIALGRPASGERFNSGRIYQRFRLRRNGRLLWSERMQLLGGSRLLESPIGFAGYPVAGTLLASGELNDQQLTACRSLPIEGGRGGLSQLPGLVVARFLGEETEAARNWFIALWQELRPALLGRSVSIPRIWNT.

This sequence belongs to the UreD family. UreD, UreF and UreG form a complex that acts as a GTP-hydrolysis-dependent molecular chaperone, activating the urease apoprotein by helping to assemble the nickel containing metallocenter of UreC. The UreE protein probably delivers the nickel.

It is found in the cytoplasm. Required for maturation of urease via the functional incorporation of the urease nickel metallocenter. The protein is Urease accessory protein UreD of Nitrosococcus oceani (strain ATCC 19707 / BCRC 17464 / JCM 30415 / NCIMB 11848 / C-107).